Here is an 856-residue protein sequence, read N- to C-terminus: Envelope glycoprotein gp160 (856 aa).

The signal sequence occupies residues 1-32; it reads MRVKEKYQHLWRWGWRWGTMLLGMLMICSATE. The Extracellular segment spans residues 33 to 684; that stretch reads KLWVTVYYGV…ITNWLWYIKL (652 aa). Cys-54 and Cys-74 are disulfide-bonded. N-linked (GlcNAc...) asparagine; by host glycosylation is found at Asn-88, Asn-136, Asn-141, Asn-156, Asn-160, Asn-186, Asn-197, Asn-230, Asn-234, Asn-241, Asn-262, Asn-276, Asn-289, Asn-295, Asn-301, Asn-332, Asn-339, and Asn-356. 5 cysteine pairs are disulfide-bonded: Cys-119–Cys-205, Cys-126–Cys-196, Cys-131–Cys-157, Cys-218–Cys-247, and Cys-228–Cys-239. The interval 131–156 is V1; it reads CTDLKNDTNTNSSSGRMIMEKGEIKN. Residues 157–196 form a V2 region; the sequence is CSFNISTSIRGKVQKEYAFFYKLDIIPIDNDTTSYKLTSC. The V3 stretch occupies residues 296–330; the sequence is CTRPNNNTRKRIRIQRGPGRAFVTIGKIGNMRQAH. Residues Cys-296 and Cys-331 are joined by a disulfide bond. A CD4-binding loop region spans residues 364–374; that stretch reads SSGGDPEIVTH. Disulfide bonds link Cys-378–Cys-445 and Cys-385–Cys-418. The interval 385-418 is V4; it reads CNSTQLFNSTWFNSTWSTEGSNNTEGSDTITLPC. Asn-386, Asn-392, Asn-397, Asn-406, Asn-448, and Asn-463 each carry an N-linked (GlcNAc...) asparagine; by host glycan. V5 regions lie at residues 461–471 and 463–471; these read SNNESEIFRPG and NESEIFRPG. Residues 512-532 form a fusion peptide region; the sequence is AVGIGALFLGFLGAAGSTMGA. The segment at 574–592 is immunosuppression; it reads KQLQARILAVERYLKDQQL. A disulfide bridge connects residues Cys-598 and Cys-604. 5 N-linked (GlcNAc...) asparagine; by host glycosylation sites follow: Asn-611, Asn-616, Asn-624, Asn-637, and Asn-674. Positions 633–667 form a coiled coil; sequence REINNYTSLIHSLIEESQNQQEKNEQELLELDKWA. Residues 662–683 are MPER; binding to GalCer; it reads ELDKWASLWNWFNITNWLWYIK. Residues 685–705 traverse the membrane as a helical segment; it reads FIMIVGGLVGLRIVFAVLSIV. Topologically, residues 706-856 are cytoplasmic; sequence NRVRQGYSPL…IRQGLERILL (151 aa). The YXXL motif; contains endocytosis signal motif lies at 712 to 715; it reads YSPL. The tract at residues 718–742 is disordered; that stretch reads QTHLPTPRGPDRPEGIEEEGGERDR. S-palmitoyl cysteine; by host attachment occurs at residues Cys-764 and Cys-837. A Di-leucine internalization motif motif is present at residues 855 to 856; that stretch reads LL.

It belongs to the HIV-1 env protein family. The mature envelope protein (Env) consists of a homotrimer of non-covalently associated gp120-gp41 heterodimers. The resulting complex protrudes from the virus surface as a spike. There seems to be as few as 10 spikes on the average virion. Interacts with host CD4, CCR5 and CXCR4. Gp120 also interacts with the C-type lectins CD209/DC-SIGN and CLEC4M/DC-SIGNR (collectively referred to as DC-SIGN(R)). Gp120 and gp41 interact with GalCer. Gp120 interacts with host ITGA4/ITGB7 complex; on CD4+ T-cells, this interaction results in rapid activation of integrin ITGAL/LFA-1, which facilitates efficient cell-to-cell spreading of HIV-1. Gp120 interacts with cell-associated heparan sulfate; this interaction increases virus infectivity on permissive cells and may be involved in infection of CD4- cells. In terms of assembly, the mature envelope protein (Env) consists of a homotrimer of non-covalently associated gp120-gp41 heterodimers. The resulting complex protrudes from the virus surface as a spike. There seems to be as few as 10 spikes on the average virion. In terms of processing, palmitoylation of the transmembrane protein and of Env polyprotein (prior to its proteolytic cleavage) is essential for their association with host cell membrane lipid rafts. Palmitoylation is therefore required for envelope trafficking to classical lipid rafts, but not for viral replication. Highly glycosylated by host. The high number of glycan on the protein is reffered to as 'glycan shield' because it contributes to hide protein sequence from adaptive immune system. Post-translationally, specific enzymatic cleavages in vivo yield mature proteins. Envelope glycoproteins are synthesized as an inactive precursor that is heavily N-glycosylated and processed likely by host cell furin in the Golgi to yield the mature SU and TM proteins. The cleavage site between SU and TM requires the minimal sequence [KR]-X-[KR]-R. About 2 of the 9 disulfide bonds of gp41 are reduced by P4HB/PDI, following binding to CD4 receptor.

Its subcellular location is the virion membrane. The protein resides in the host cell membrane. It localises to the host endosome membrane. Functionally, oligomerizes in the host endoplasmic reticulum into predominantly trimers. In a second time, gp160 transits in the host Golgi, where glycosylation is completed. The precursor is then proteolytically cleaved in the trans-Golgi and thereby activated by cellular furin or furin-like proteases to produce gp120 and gp41. Its function is as follows. Attaches the virus to the host lymphoid cell by binding to the primary receptor CD4. This interaction induces a structural rearrangement creating a high affinity binding site for a chemokine coreceptor like CXCR4 and/or CCR5. Acts as a ligand for CD209/DC-SIGN and CLEC4M/DC-SIGNR, which are respectively found on dendritic cells (DCs), and on endothelial cells of liver sinusoids and lymph node sinuses. These interactions allow capture of viral particles at mucosal surfaces by these cells and subsequent transmission to permissive cells. HIV subverts the migration properties of dendritic cells to gain access to CD4+ T-cells in lymph nodes. Virus transmission to permissive T-cells occurs either in trans (without DCs infection, through viral capture and transmission), or in cis (following DCs productive infection, through the usual CD4-gp120 interaction), thereby inducing a robust infection. In trans infection, bound virions remain infectious over days and it is proposed that they are not degraded, but protected in non-lysosomal acidic organelles within the DCs close to the cell membrane thus contributing to the viral infectious potential during DCs' migration from the periphery to the lymphoid tissues. On arrival at lymphoid tissues, intact virions recycle back to DCs' cell surface allowing virus transmission to CD4+ T-cells. Acts as a class I viral fusion protein. Under the current model, the protein has at least 3 conformational states: pre-fusion native state, pre-hairpin intermediate state, and post-fusion hairpin state. During fusion of viral and target intracellular membranes, the coiled coil regions (heptad repeats) assume a trimer-of-hairpins structure, positioning the fusion peptide in close proximity to the C-terminal region of the ectodomain. The formation of this structure appears to drive apposition and subsequent fusion of viral and target cell membranes. Complete fusion occurs in host cell endosomes and is dynamin-dependent, however some lipid transfer might occur at the plasma membrane. The virus undergoes clathrin-dependent internalization long before endosomal fusion, thus minimizing the surface exposure of conserved viral epitopes during fusion and reducing the efficacy of inhibitors targeting these epitopes. Membranes fusion leads to delivery of the nucleocapsid into the cytoplasm. The chain is Envelope glycoprotein gp160 from Homo sapiens (Human).